The chain runs to 352 residues: Nodal homolog 4-B (352 aa).

Residues 1–18 form the signal peptide; it reads MHLYFSCFILLFVPGGKS. The propeptide occupies 19 to 278; sequence LGINSHLKHM…TIANSRRHRR (260 aa). N-linked (GlcNAc...) asparagine glycosylation is found at asparagine 30, asparagine 37, asparagine 199, and asparagine 238. A disordered region spans residues 197–223; sequence GKNHSEGHMKQPKKLHRAKSAERRYQQ.

This sequence belongs to the TGF-beta family. Homodimer; disulfide-linked.

It localises to the secreted. Functionally, cooperation and regulatory loops of multiple nodals are essential for mesendoderm patterning in early embryos. Plays a role in mesoderm formation and may be required for neural development. The sequence is that of Nodal homolog 4-B (nodal4-b) from Xenopus laevis (African clawed frog).